The following is a 489-amino-acid chain: Homoserine O-acetyltransferase (489 aa).

Residues 69-438 (LLLCHALSGS…AEGHDGFLLE (370 aa)) form the AB hydrolase-1 domain. Ser163 (nucleophile) is an active-site residue. Positions 255-329 (ASRHPYPDRL…QTTDSSSLNQ (75 aa)) are disordered. Residues 280–290 (EGNRNRRERPC) are compositionally biased toward basic and acidic residues. Positions 299-329 (SESALNSPASSVSSLPSLGASQTTDSSSLNQ) are enriched in low complexity. Residues Asp403 and His432 contribute to the active site.

It belongs to the AB hydrolase superfamily. MetX family.

It localises to the cytoplasm. It catalyses the reaction L-homoserine + acetyl-CoA = O-acetyl-L-homoserine + CoA. Its pathway is amino-acid biosynthesis; L-methionine biosynthesis via de novo pathway; O-acetyl-L-homoserine from L-homoserine: step 1/1. Its function is as follows. Commits homoserine to the methionine biosynthesis pathway by catalyzing its O-acetylation. This is Homoserine O-acetyltransferase (met6) from Schizosaccharomyces pombe (strain 972 / ATCC 24843) (Fission yeast).